A 317-amino-acid polypeptide reads, in one-letter code: Melanocyte-stimulating hormone receptor (317 aa).

Residues 1-37 (MPMQGAQRRLLGSLNSTPTATPNLGLAANHTGAPCLE) lie on the Extracellular side of the membrane. Asparagine 29 carries N-linked (GlcNAc...) asparagine glycosylation. A helical membrane pass occupies residues 38 to 63 (VSIPDGLFLSLGLVSLVENVLVVAAI). Over 64 to 72 (AKNRNLHSP) the chain is Cytoplasmic. A helical membrane pass occupies residues 73-93 (MYCFICCLALSDLLVSGSNML). Residues 94 to 118 (ETAVILLLEAGALATRASVVQQLQN) are Extracellular-facing. The helical transmembrane segment at 119 to 140 (TIDVLTCSSMLCSLCFLGAIAV) threads the bilayer. The Cytoplasmic portion of the chain corresponds to 141 to 163 (DRYVSIFYALRYHSIVTLPRARR). Residues 164–183 (AIAAIWVASVLSSTLFIAYC) form a helical membrane-spanning segment. The Extracellular portion of the chain corresponds to 184 to 191 (DHAAVLLC). The helical transmembrane segment at 192–211 (LVVFFLAMLVLMAVLYVHML) threads the bilayer. Over 212–240 (ARACQHAQGITRLHKRQLPAHQGFGLRGA) the chain is Cytoplasmic. The chain crosses the membrane as a helical span at residues 241–266 (ATLTILLGIFFLCWGPFFLHLMLVVL). Residues 267–279 (CPQHLTCSCIFKN) lie on the Extracellular side of the membrane. The helical transmembrane segment at 280–300 (FKVFLTLIICNTIIDPLIYAF) threads the bilayer. At 301–317 (RSQELCRTLKEVLLCSW) the chain is on the cytoplasmic side. Cysteine 315 carries the S-palmitoyl cysteine lipid modification.

The protein belongs to the G-protein coupled receptor 1 family. In terms of assembly, interacts with MGRN1, but does not undergo MGRN1-mediated ubiquitination; this interaction competes with GNAS-binding and thus inhibits agonist-induced cAMP production. Interacts with OPN3; the interaction results in a decrease in MC1R-mediated cAMP signaling and ultimately a decrease in melanin production in melanocytes.

Its subcellular location is the cell membrane. In terms of biological role, receptor for MSH (alpha, beta and gamma) and ACTH. The activity of this receptor is mediated by G proteins which activate adenylate cyclase. Mediates melanogenesis, the production of eumelanin (black/brown) and phaeomelanin (red/yellow), via regulation of cAMP signaling in melanocytes. This Alouatta palliata (Mantled howler monkey) protein is Melanocyte-stimulating hormone receptor (MC1R).